Reading from the N-terminus, the 473-residue chain is Glycine--tRNA ligase (473 aa).

2 residues coordinate substrate: Arg101 and Glu172. Residues 204-206, 214-219, 289-290, and 333-336 contribute to the ATP site; these read RNE, FRTREF, EL, and GVER. Residue 219 to 223 coordinates substrate; it reads FEQME. A substrate-binding site is contributed by 329–333; that stretch reads EPSVG.

Belongs to the class-II aminoacyl-tRNA synthetase family. In terms of assembly, homodimer.

Its subcellular location is the cytoplasm. It catalyses the reaction tRNA(Gly) + glycine + ATP = glycyl-tRNA(Gly) + AMP + diphosphate. Its function is as follows. Catalyzes the attachment of glycine to tRNA(Gly). This is Glycine--tRNA ligase from Ureaplasma parvum serovar 3 (strain ATCC 27815 / 27 / NCTC 11736).